The chain runs to 279 residues: Secreted RxLR effector protein 90 (279 aa).

Positions 1–19 (MKSAAAFATFLTLSVFVAT) are cleaved as a signal peptide. The short motif at 29–46 (RGLRSLADNQSTESSEGR) is the RxLR-dEER element. Disordered stretches follow at residues 29 to 53 (RGLR…YNHH) and 135 to 176 (ATPA…NLAG). A glycan (N-linked (GlcNAc...) asparagine) is linked at asparagine 37. Positions 135–146 (ATPAPTTSVPSS) are enriched in low complexity. Positions 147–163 (LVNTDTSDNQLPTTPVA) are enriched in polar residues. Positions 166–176 (QGGGIGSNLAG) are enriched in gly residues. The N-linked (GlcNAc...) asparagine glycan is linked to asparagine 217.

The protein belongs to the RxLR effector family.

The protein resides in the secreted. The protein localises to the host cell membrane. Secreted effector that completely suppresses the host cell death induced by cell death-inducing proteins. The protein is Secreted RxLR effector protein 90 of Plasmopara viticola (Downy mildew of grapevine).